We begin with the raw amino-acid sequence, 622 residues long: Probable potassium transport system protein Kup 1 (622 aa).

12 helical membrane passes run 7-27 (LLVL…TSPL), 50-70 (LISL…VLFL), 96-116 (TAIL…DAMI), 132-152 (VTPA…LLLF), 165-185 (FFGP…FVHI), 210-230 (VGIV…ALYA), 244-264 (WFTV…AFVL), 282-302 (ALLP…QAVI), 334-354 (IYLP…VFLF), 360-380 (LATA…VLSF), 391-411 (TWWA…FLGA), and 416-436 (IHDG…IMWT).

It belongs to the HAK/KUP transporter (TC 2.A.72) family.

The protein resides in the cell inner membrane. It carries out the reaction K(+)(in) + H(+)(in) = K(+)(out) + H(+)(out). Its function is as follows. Transport of potassium into the cell. Likely operates as a K(+):H(+) symporter. This is Probable potassium transport system protein Kup 1 from Rhizobium meliloti (strain 1021) (Ensifer meliloti).